The chain runs to 250 residues: ATP synthase subunit a (250 aa).

The next 6 helical transmembrane spans lie at 29 to 49 (ASLF…FATS), 84 to 104 (FFPL…LGMF), 114 to 134 (IIVT…YGFY), 143 to 163 (VFVP…IEII), 193 to 213 (FVAS…LPLI), and 216 to 236 (VALT…FAVL).

It belongs to the ATPase A chain family. F-type ATPases have 2 components, CF(1) - the catalytic core - and CF(0) - the membrane proton channel. CF(1) has five subunits: alpha(3), beta(3), gamma(1), delta(1), epsilon(1). CF(0) has three main subunits: a(1), b(2) and c(9-12). The alpha and beta chains form an alternating ring which encloses part of the gamma chain. CF(1) is attached to CF(0) by a central stalk formed by the gamma and epsilon chains, while a peripheral stalk is formed by the delta and b chains.

The protein resides in the cell inner membrane. Key component of the proton channel; it plays a direct role in the translocation of protons across the membrane. The protein is ATP synthase subunit a of Rhizobium leguminosarum bv. trifolii (strain WSM2304).